We begin with the raw amino-acid sequence, 196 residues long: T-cell surface glycoprotein CD3 epsilon chain (196 aa).

The signal sequence occupies residues 1 to 21 (MPSGNLWKVLGLCLLSVGAWG). The Extracellular portion of the chain corresponds to 22–116 (QEDIERPDED…VCENCVEVDL (95 aa)). Residues 28–102 (PDEDTQKTFK…VGEKTSHRLY (75 aa)) enclose the Ig-like domain. C49 and C91 are oxidised to a cystine. Residues 117–137 (MAVVTIIVVDICITLGLLMVV) form a helical membrane-spanning segment. At 138 to 196 (YYYSKSRKAKAMPVTRGAGAGGRPRGQNRERPPPVPNPDYEPIRKGQRDLYSGLNQRGR) the chain is on the cytoplasmic side. The tract at residues 150-196 (PVTRGAGAGGRPRGQNRERPPPVPNPDYEPIRKGQRDLYSGLNQRGR) is disordered. The NUMB-binding region stretch occupies residues 164-181 (QNRERPPPVPNPDYEPIR). The ITAM domain maps to 167–194 (ERPPPVPNPDYEPIRKGQRDLYSGLNQR). Positions 168–175 (RPPPVPNP) are proline-rich sequence. 2 positions are modified to phosphotyrosine: Y177 and Y188.

As to quaternary structure, the TCR-CD3 complex is composed of a CD3D/CD3E and a CD3G/CD3E heterodimers that preferentially associate with TCRalpha and TCRbeta, respectively, to form TCRalpha/CD3E/CD3G and TCRbeta/CD3G/CD3E trimers. In turn, the hexamer interacts with CD3Z homodimer to form the TCR-CD3 complex. Alternatively, TCRalpha and TCRbeta can be replaced by TCRgamma and TCRdelta. Interacts with CD6. Interacts (via Proline-rich sequence) with NCK1; the interaction is ligand dependent but independent of tyrosine kinase activation. Post-translationally, phosphorylated on Tyr residues after T-cell receptor triggering by LCK in association with CD4/CD8.

The protein resides in the cell membrane. In terms of biological role, part of the TCR-CD3 complex present on T-lymphocyte cell surface that plays an essential role in adaptive immune response. When antigen presenting cells (APCs) activate T-cell receptor (TCR), TCR-mediated signals are transmitted across the cell membrane by the CD3 chains CD3D, CD3E, CD3G and CD3Z. All CD3 chains contain immunoreceptor tyrosine-based activation motifs (ITAMs) in their cytoplasmic domain. Upon TCR engagement, these motifs become phosphorylated by Src family protein tyrosine kinases LCK and FYN, resulting in the activation of downstream signaling pathways. In addition of this role of signal transduction in T-cell activation, CD3E plays an essential role in correct T-cell development. Also participates in internalization and cell surface down-regulation of TCR-CD3 complexes via endocytosis sequences present in CD3E cytosolic region. In addition to its role as a TCR coreceptor, it serves as a receptor for ITPRIPL1. Ligand recognition inhibits T-cell activation by promoting interaction with NCK1, which prevents CD3E-ZAP70 interaction and blocks the ERK-NFkB signaling cascade and calcium influx. The polypeptide is T-cell surface glycoprotein CD3 epsilon chain (CD3E) (Sus scrofa (Pig)).